A 238-amino-acid chain; its full sequence is Ribonuclease PH (238 aa).

Phosphate is bound by residues arginine 86 and 124–126; that span reads GTR.

It belongs to the RNase PH family. Homohexameric ring arranged as a trimer of dimers.

The catalysed reaction is tRNA(n+1) + phosphate = tRNA(n) + a ribonucleoside 5'-diphosphate. Its function is as follows. Phosphorolytic 3'-5' exoribonuclease that plays an important role in tRNA 3'-end maturation. Removes nucleotide residues following the 3'-CCA terminus of tRNAs; can also add nucleotides to the ends of RNA molecules by using nucleoside diphosphates as substrates, but this may not be physiologically important. Probably plays a role in initiation of 16S rRNA degradation (leading to ribosome degradation) during starvation. In Mesorhizobium japonicum (strain LMG 29417 / CECT 9101 / MAFF 303099) (Mesorhizobium loti (strain MAFF 303099)), this protein is Ribonuclease PH.